An 88-amino-acid chain; its full sequence is Gas vesicle protein A2 (88 aa).

It belongs to the gas vesicle GvpA family. The gas vesicle shell is 2 nm thick and consists of a single layer of this protein. It forms helical ribs nearly perpendicular to the long axis of the vesicle.

Its subcellular location is the gas vesicle shell. In terms of biological role, gas vesicles are hollow, gas filled proteinaceous nanostructures found in some microorganisms. During planktonic growth they allow positioning of the organism at a favorable depth for light or nutrient acquisition. GvpA forms the protein shell. Functionally, it is not clear if the 2 type A proteins in this organism are functionally redundant. Its function is as follows. When a minimal gvp locus (gvpA2-gvpR-gvpN-gvpF-gvpG-gvpL-gvpS-gvpK-gvpJ-gvpT-gvpU, called pNL29) is expressed in E.coli gas vesicles are made. The sequence is that of Gas vesicle protein A2 from Priestia megaterium (Bacillus megaterium).